A 597-amino-acid polypeptide reads, in one-letter code: Elongation factor 4 (597 aa).

In terms of domain architecture, tr-type G spans 2 to 184; sequence KHIRNFSIIA…TIVKSIPAPE (183 aa). GTP-binding positions include 14–19 and 131–134; these read DHGKST and NKID.

Belongs to the TRAFAC class translation factor GTPase superfamily. Classic translation factor GTPase family. LepA subfamily.

The protein resides in the cell inner membrane. The enzyme catalyses GTP + H2O = GDP + phosphate + H(+). In terms of biological role, required for accurate and efficient protein synthesis under certain stress conditions. May act as a fidelity factor of the translation reaction, by catalyzing a one-codon backward translocation of tRNAs on improperly translocated ribosomes. Back-translocation proceeds from a post-translocation (POST) complex to a pre-translocation (PRE) complex, thus giving elongation factor G a second chance to translocate the tRNAs correctly. Binds to ribosomes in a GTP-dependent manner. The polypeptide is Elongation factor 4 (Aliivibrio fischeri (strain MJ11) (Vibrio fischeri)).